A 144-amino-acid chain; its full sequence is Large ribosomal subunit protein uL11 (144 aa).

This sequence belongs to the universal ribosomal protein uL11 family. Part of the ribosomal stalk of the 50S ribosomal subunit. Interacts with L10 and the large rRNA to form the base of the stalk. L10 forms an elongated spine to which L12 dimers bind in a sequential fashion forming a multimeric L10(L12)X complex. Post-translationally, one or more lysine residues are methylated.

In terms of biological role, forms part of the ribosomal stalk which helps the ribosome interact with GTP-bound translation factors. The sequence is that of Large ribosomal subunit protein uL11 from Neisseria gonorrhoeae (strain ATCC 700825 / FA 1090).